A 292-amino-acid chain; its full sequence is Glutamate racemase (292 aa).

Residues 10–11 (DS) and 42–43 (YG) each bind substrate. C73 serves as the catalytic Proton donor/acceptor. 74–75 (NS) serves as a coordination point for substrate. The active-site Proton donor/acceptor is C186. 187-188 (TH) contacts substrate.

Belongs to the aspartate/glutamate racemases family.

It catalyses the reaction L-glutamate = D-glutamate. It functions in the pathway cell wall biogenesis; peptidoglycan biosynthesis. Functionally, provides the (R)-glutamate required for cell wall biosynthesis. This Beutenbergia cavernae (strain ATCC BAA-8 / DSM 12333 / CCUG 43141 / JCM 11478 / NBRC 16432 / NCIMB 13614 / HKI 0122) protein is Glutamate racemase.